Reading from the N-terminus, the 280-residue chain is DCN1-like protein 4 (280 aa).

Residues 37–71 (GPESHGTACCSRAMPPRKKRRPTAGDDLSAKKSRQ) are disordered. The 187-residue stretch at 89-275 (FSSKRCLEWF…LLDEFVEWYK (187 aa)) folds into the DCUN1 domain.

As to quaternary structure, may interact (via the DCUN1 domain) with unneddylated cullins.

It localises to the nucleus. Its function is as follows. Contributes to the neddylation of all cullins by transferring NEDD8 from N-terminally acetylated NEDD8-conjugating E2s enzyme to different cullin C-terminal domain-RBX complexes. This is DCN1-like protein 4 from Danio rerio (Zebrafish).